The sequence spans 407 residues: Ribosomal protein uL3-like (407 aa).

The segment covering 1–31 has biased composition (basic residues); that stretch reads MSHRKFSAPRHGHLGFLPHKRSHRHRGKVKT. 2 disordered regions span residues 1 to 35 and 387 to 407; these read MSHR…WPRD and AFMG…SGDL.

Belongs to the universal ribosomal protein uL3 family. In terms of assembly, component of the large ribosomal subunit in striated muscle cells.

Heart- and skeletal muscle-specific component of the ribosome, which regulates muscle function. Component of the large ribosomal subunit in striated muscle cells: replaces the RPL3 paralog in the ribosome in these cells. The ribosome is a large ribonucleoprotein complex responsible for the synthesis of proteins in the cell. Inhibits myotube growth and muscle function. This is Ribosomal protein uL3-like from Homo sapiens (Human).